The sequence spans 405 residues: Divinyl chlorophyllide a 8-vinyl-reductase, chloroplastic (405 aa).

A chloroplast-targeting transit peptide spans 1 to 58; that stretch reads MAALLLSSHLTAASSSSTTSPTARPAPSFVSFRAANAAPKGARRGWPFLASSVEPPPA.

Its subcellular location is the plastid. It localises to the chloroplast. It catalyses the reaction protochlorophyllide a + NADP(+) = 3,8-divinyl protochlorophyllide a + NADPH + H(+). It functions in the pathway porphyrin-containing compound metabolism; chlorophyll biosynthesis. Catalyzes the conversion of divinyl chlorophyllide to monovinyl chlorophyllide. Reduces the 8-vinyl group of the tetrapyrrole to an ethyl group using NADPH as the reductant. Can use (3,8-divinyl)-chlorophyllide a (DV-Chlidea) &gt; (3,8-divinyl)-chlorophyll a (DV-Chla) &gt; (3,8-divinyl)-protochlorophyllide a (DV-Pchlidea) &gt; (3,8-divinyl)-magnesium-protoporphyrin IX monomethyl ester (DV-MPE) &gt; (3,8-divinyl)-magnesium-protoporphyrin IX (DV-Mg-Proto) as substrates. This is Divinyl chlorophyllide a 8-vinyl-reductase, chloroplastic (DVR) from Oryza sativa subsp. indica (Rice).